The sequence spans 132 residues: Small ribosomal subunit protein uS8c (132 aa).

The protein belongs to the universal ribosomal protein uS8 family. Part of the 30S ribosomal subunit.

It is found in the plastid. The protein localises to the chloroplast. Functionally, one of the primary rRNA binding proteins, it binds directly to 16S rRNA central domain where it helps coordinate assembly of the platform of the 30S subunit. This Nymphaea alba (White water-lily) protein is Small ribosomal subunit protein uS8c (rps8).